Consider the following 259-residue polypeptide: Ferritin-2, chloroplastic (259 aa).

A chloroplast-targeting transit peptide spans 1–52; sequence MLLKLAPAFTLLNSHGENLSPMLSTSSQGFVLKNFSTKSRNGLLVVCASKGS. Residues 53–85 are extension peptide (EP); that stretch reads NTKPLTGVVFEPFEEVKKELMLVPTVPQVSLAR. One can recognise a Ferritin-like diiron domain in the interval 86 to 239; that stretch reads HKYSDQCEAA…EYVAQLRRVG (154 aa). Fe cation contacts are provided by Glu103, Glu138, His141, and Gln221.

The protein belongs to the ferritin family. In terms of assembly, oligomer of 24 subunits. There are two types of subunits: L (light) chain and H (heavy) chain. The major chain can be light or heavy, depending on the species and tissue type. The functional molecule forms a roughly spherical shell with a diameter of 12 nm and contains a central cavity into which the insoluble mineral iron core is deposited.

It localises to the plastid. The protein localises to the chloroplast. It catalyses the reaction 4 Fe(2+) + O2 + 4 H(+) = 4 Fe(3+) + 2 H2O. Functionally, stores iron in a soluble, non-toxic, readily available form. Important for iron homeostasis. Has ferroxidase activity. Iron is taken up in the ferrous form and deposited as ferric hydroxides after oxidation. This Nicotiana tabacum (Common tobacco) protein is Ferritin-2, chloroplastic (FER2).